The following is a 676-amino-acid chain: MAKRKLNETDEPSVVTEPQTQKKTKKSSTEKKEKKEKKSKSQSVKPQEEKPEATQQQAQQQTEEEQELEQQLKDEQKQQDEKDEKKQSEKDDADLTFSDLGLDPRLVQAVAKQSFEKPTLVQRKAIPLALAGQDVLCKAKTGSGKTAAYVLPVLSGILKRKATDPTPFTSALILVPTRELADQVHKAIDAFSAFCTKDIQSAKLTDNVSDAVLRSLLANAPDVIVSTPARAWHNIESGALSVAKLQYLVLDEADLVLSYGYDEDMENIARSLPKGGVQTTMMSATLVSDELDTLKGFFCRNPTMLDLKEEFSNEDEKLTQFYVKCGEDDKWLISYLIFKLQLIKGPCLVFVADIDRAYRLKLFFEQFSIRSCVLNSELPINTRIKIIEEFNRGIYDIIIASDERSEVFLEDEKTEEKKEEQGEKKEGDEKKNGKGKKKKGRRDQEYGVSRGIDFKNVAAVINFDMPTSSSSYIHRIGRTARAGRAGIALSMVVPHDLFGKHKPTSIKQCEKDEKVLAKVMRQQAKLNRKLEPYNFNKDQMEAFRYRMNDALRAVTKVAIREARTRELRQELLRSETLKRYFEENPHELSHLRHDGELGTKMRQQAHLKHVPDYLLPQDGKNALTETQIGFVPFKKQGDDKKTRGKKGAKGGKGGHGKYKKGPGGRKNVLKTFRVRK.

Residues 1 to 97 are disordered; sequence MAKRKLNETD…SEKDDADLTF (97 aa). Residues 70–90 show a composition bias toward basic and acidic residues; sequence QQLKDEQKQQDEKDEKKQSEK. Residues 95–123 carry the Q motif motif; it reads LTFSDLGLDPRLVQAVAKQSFEKPTLVQR. In terms of domain architecture, Helicase ATP-binding spans 126–304; sequence IPLALAGQDV…KGFFCRNPTM (179 aa). Residue 139 to 146 coordinates ATP; that stretch reads AKTGSGKT. Positions 251 to 254 match the DEAD box motif; that stretch reads DEAD. The Helicase C-terminal domain occupies 317–541; the sequence is KLTQFYVKCG…PYNFNKDQME (225 aa). Positions 410–432 are enriched in basic and acidic residues; the sequence is EDEKTEEKKEEQGEKKEGDEKKN. Disordered regions lie at residues 410 to 444 and 633 to 676; these read EDEKTEEKKEEQGEKKEGDEKKNGKGKKKKGRRDQ and FKKQ…RVRK. Positions 642 to 663 are enriched in basic residues; the sequence is TRGKKGAKGGKGGHGKYKKGPG.

This sequence belongs to the DEAD box helicase family. DDX56/DBP9 subfamily.

It is found in the nucleus. It localises to the nucleolus. The catalysed reaction is ATP + H2O = ADP + phosphate + H(+). Its function is as follows. ATP-binding RNA helicase involved in the biogenesis of 60S ribosomal subunits and is required for the normal formation of 25S and 5.8S rRNAs. This Neurospora crassa (strain ATCC 24698 / 74-OR23-1A / CBS 708.71 / DSM 1257 / FGSC 987) protein is ATP-dependent RNA helicase dbp-9 (dbp-9).